The sequence spans 405 residues: Phosphopentomutase (405 aa).

Mn(2+)-binding residues include Asp-10, Asp-303, His-308, Asp-344, His-345, and His-356.

Belongs to the phosphopentomutase family. Requires Mn(2+) as cofactor.

Its subcellular location is the cytoplasm. The enzyme catalyses 2-deoxy-alpha-D-ribose 1-phosphate = 2-deoxy-D-ribose 5-phosphate. It carries out the reaction alpha-D-ribose 1-phosphate = D-ribose 5-phosphate. It functions in the pathway carbohydrate degradation; 2-deoxy-D-ribose 1-phosphate degradation; D-glyceraldehyde 3-phosphate and acetaldehyde from 2-deoxy-alpha-D-ribose 1-phosphate: step 1/2. Isomerase that catalyzes the conversion of deoxy-ribose 1-phosphate (dRib-1-P) and ribose 1-phosphate (Rib-1-P) to deoxy-ribose 5-phosphate (dRib-5-P) and ribose 5-phosphate (Rib-5-P), respectively. The chain is Phosphopentomutase from Shewanella loihica (strain ATCC BAA-1088 / PV-4).